Here is a 447-residue protein sequence, read N- to C-terminus: Voltage-gated purine nucleotide uniporter SLC17A9 (447 aa).

The interval 1–26 (MPSQRSSLMQPIPEETRKTPSAAAED) is disordered. The next 11 membrane-spanning stretches (helical) occupy residues 40–60 (ILLL…VCTV), 74–94 (GIVL…GGHL), 103–123 (VILL…LLAH), 129–149 (LAFL…YFPA), 169–189 (TVGA…SVLL), 192–212 (CGWQ…AYYV), 252–272 (VWAA…LLSW), 287–307 (WVFN…SGFI), 327–347 (VMGL…TSFL), 380–400 (GFLF…GVCL), and 413–433 (CVFH…LVFG).

Belongs to the major facilitator superfamily. Sodium/anion cotransporter family. In brain, specifically expressed in the medulla and is associated with chromaffin granules (at protein level). Predominantly expressed in adrenal gland, brain and thyroid.

It is found in the cytoplasmic vesicle. Its subcellular location is the secretory vesicle. It localises to the chromaffin granule membrane. The protein localises to the secretory vesicle membrane. The protein resides in the lysosome membrane. It carries out the reaction ATP(in) = ATP(out). The enzyme catalyses ADP(in) = ADP(out). It catalyses the reaction GTP(in) = GTP(out). With respect to regulation, activity is chloride-dependent. Voltage-gated ATP nucleotide uniporter that can also transport the purine nucleotides ADP and GTP. Uses the membrane potential as the driving force to control ATP accumulation in lysosomes and secretory vesicles. By controlling ATP storage in lysosomes, regulates ATP-dependent proteins of these organelles. Also indirectly regulates the exocytosis of ATP through its import into lysosomes in astrocytes and secretory vesicles such as adrenal chromaffin granules, mucin granules and synaptic vesicles. This Mus musculus (Mouse) protein is Voltage-gated purine nucleotide uniporter SLC17A9.